The sequence spans 342 residues: Trans-3-hydroxy-L-proline dehydratase (342 aa).

Serine 90 functions as the Proton acceptor in the catalytic mechanism. Substrate-binding positions include 91-92 (GS), aspartate 252, and 257-258 (GT).

The protein belongs to the proline racemase family.

The enzyme catalyses trans-3-hydroxy-L-proline = 1-pyrroline-2-carboxylate + H2O. In terms of biological role, catalyzes the dehydration of trans-3-hydroxy-L-proline (t3LHyp) to Delta(1)-pyrroline-2-carboxylate (Pyr2C). Is likely involved in a degradation pathway that converts t3LHyp to L-proline. Displays neither proline racemase activity nor 4-hydroxyproline 2-epimerase activity. This Allorhizobium ampelinum (strain ATCC BAA-846 / DSM 112012 / S4) (Agrobacterium vitis (strain S4)) protein is Trans-3-hydroxy-L-proline dehydratase.